Consider the following 452-residue polypeptide: UPF0210 protein Daud_1353 (452 aa).

Belongs to the UPF0210 family. In terms of assembly, homodimer.

This is UPF0210 protein Daud_1353 from Desulforudis audaxviator (strain MP104C).